The primary structure comprises 445 residues: Probable glycine dehydrogenase (decarboxylating) subunit 1 (445 aa).

It belongs to the GcvP family. N-terminal subunit subfamily. As to quaternary structure, the glycine cleavage system is composed of four proteins: P, T, L and H. In this organism, the P 'protein' is a heterodimer of two subunits.

It carries out the reaction N(6)-[(R)-lipoyl]-L-lysyl-[glycine-cleavage complex H protein] + glycine + H(+) = N(6)-[(R)-S(8)-aminomethyldihydrolipoyl]-L-lysyl-[glycine-cleavage complex H protein] + CO2. The glycine cleavage system catalyzes the degradation of glycine. The P protein binds the alpha-amino group of glycine through its pyridoxal phosphate cofactor; CO(2) is released and the remaining methylamine moiety is then transferred to the lipoamide cofactor of the H protein. In Anaeromyxobacter dehalogenans (strain 2CP-C), this protein is Probable glycine dehydrogenase (decarboxylating) subunit 1.